The primary structure comprises 78 residues: MSDSAEKVKKIVVEHLGVEADKVTEEASFIDDLGADSLDIVELVMAFEEEFGVEIPDDAAEKIATVKDAIDYIEANKG.

Residues 2 to 77 form the Carrier domain; sequence SDSAEKVKKI…DAIDYIEANK (76 aa). O-(pantetheine 4'-phosphoryl)serine is present on Ser-37.

It belongs to the acyl carrier protein (ACP) family. 4'-phosphopantetheine is transferred from CoA to a specific serine of apo-ACP by AcpS. This modification is essential for activity because fatty acids are bound in thioester linkage to the sulfhydryl of the prosthetic group.

Its subcellular location is the cytoplasm. Its pathway is lipid metabolism; fatty acid biosynthesis. Its function is as follows. Carrier of the growing fatty acid chain in fatty acid biosynthesis. This is Acyl carrier protein from Sphingopyxis alaskensis (strain DSM 13593 / LMG 18877 / RB2256) (Sphingomonas alaskensis).